The chain runs to 471 residues: Coronin-6 (471 aa).

5 WD repeats span residues 79-119, 129-169, 173-212, 216-259, and 264-304; these read GHTG…PVRN, GHSK…VLLS, IHPD…VVAE, PHEG…EPVA, and DTSN…PFVH. The disordered stretch occupies residues 410–433; that stretch reads ILDVRPPASPRRSQSASEAPLSQH. The segment covering 419–429 has biased composition (low complexity); the sequence is PRRSQSASEAP. A coiled-coil region spans residues 426–468; the sequence is SEAPLSQHTLETLLEEIKALRDRVQAQEERITALENMLCELVD.

The polypeptide is Coronin-6 (Coro6) (Mus musculus (Mouse)).